The primary structure comprises 302 residues: Glycine--tRNA ligase alpha subunit (302 aa).

Belongs to the class-II aminoacyl-tRNA synthetase family. As to quaternary structure, tetramer of two alpha and two beta subunits.

The protein localises to the cytoplasm. The catalysed reaction is tRNA(Gly) + glycine + ATP = glycyl-tRNA(Gly) + AMP + diphosphate. The polypeptide is Glycine--tRNA ligase alpha subunit (Wigglesworthia glossinidia brevipalpis).